A 490-amino-acid polypeptide reads, in one-letter code: ATP synthase subunit beta (490 aa).

175 to 182 (GGAGVGKT) is a binding site for ATP.

This sequence belongs to the ATPase alpha/beta chains family. F-type ATPases have 2 components, CF(1) - the catalytic core - and CF(0) - the membrane proton channel. CF(1) has five subunits: alpha(3), beta(3), gamma(1), delta(1), epsilon(1). CF(0) has three main subunits: a(1), b(2) and c(9-12). The alpha and beta chains form an alternating ring which encloses part of the gamma chain. CF(1) is attached to CF(0) by a central stalk formed by the gamma and epsilon chains, while a peripheral stalk is formed by the delta and b chains.

Its subcellular location is the cell membrane. It carries out the reaction ATP + H2O + 4 H(+)(in) = ADP + phosphate + 5 H(+)(out). In terms of biological role, produces ATP from ADP in the presence of a proton gradient across the membrane. The catalytic sites are hosted primarily by the beta subunits. The chain is ATP synthase subunit beta from Acidothermus cellulolyticus (strain ATCC 43068 / DSM 8971 / 11B).